The chain runs to 137 residues: Large ribosomal subunit protein uL16 (137 aa).

It belongs to the universal ribosomal protein uL16 family. In terms of assembly, part of the 50S ribosomal subunit.

Its function is as follows. Binds 23S rRNA and is also seen to make contacts with the A and possibly P site tRNAs. In Stenotrophomonas maltophilia (strain K279a), this protein is Large ribosomal subunit protein uL16.